Reading from the N-terminus, the 101-residue chain is Small ribosomal subunit protein uS14 (101 aa).

It belongs to the universal ribosomal protein uS14 family. In terms of assembly, part of the 30S ribosomal subunit. Contacts proteins S3 and S10.

Binds 16S rRNA, required for the assembly of 30S particles and may also be responsible for determining the conformation of the 16S rRNA at the A site. The chain is Small ribosomal subunit protein uS14 from Wigglesworthia glossinidia brevipalpis.